Consider the following 255-residue polypeptide: 4-hydroxy-tetrahydrodipicolinate reductase (255 aa).

Residues glycine 8–methionine 13, alanine 88–threonine 90, and serine 112–methionine 115 contribute to the NAD(+) site. Residue histidine 144 is the Proton donor/acceptor of the active site. Histidine 145 serves as a coordination point for (S)-2,3,4,5-tetrahydrodipicolinate. Catalysis depends on lysine 148, which acts as the Proton donor. Residue glycine 154 to threonine 155 participates in (S)-2,3,4,5-tetrahydrodipicolinate binding.

This sequence belongs to the DapB family.

The protein resides in the cytoplasm. It catalyses the reaction (S)-2,3,4,5-tetrahydrodipicolinate + NAD(+) + H2O = (2S,4S)-4-hydroxy-2,3,4,5-tetrahydrodipicolinate + NADH + H(+). The catalysed reaction is (S)-2,3,4,5-tetrahydrodipicolinate + NADP(+) + H2O = (2S,4S)-4-hydroxy-2,3,4,5-tetrahydrodipicolinate + NADPH + H(+). The protein operates within amino-acid biosynthesis; L-lysine biosynthesis via DAP pathway; (S)-tetrahydrodipicolinate from L-aspartate: step 4/4. Catalyzes the conversion of 4-hydroxy-tetrahydrodipicolinate (HTPA) to tetrahydrodipicolinate. This chain is 4-hydroxy-tetrahydrodipicolinate reductase, found in Sulfurovum sp. (strain NBC37-1).